The sequence spans 759 residues: Mitogen-activated protein kinase kinase kinase 1a (759 aa).

3 stretches are compositionally biased toward basic and acidic residues: residues 1–17 (MIEE…DRGS), 25–36 (SFEDKGSSHDWK), and 52–64 (AKKD…KVDS). Disordered stretches follow at residues 1–90 (MIEE…NLSK), 122–160 (LGIE…SHDF), 165–184 (SRVD…LAPM), and 195–239 (RKHR…PDPL). Residues 72 to 85 (VHSTSSPRLSPASS) are compositionally biased toward low complexity. The region spanning 426 to 679 (WAKGEFLGSG…CDMLLAHPFI (254 aa)) is the Protein kinase domain. Residues 432 to 440 (LGSGTFGSV) and Lys454 contribute to the ATP site. Asp549 acts as the Proton acceptor in catalysis.

This sequence belongs to the protein kinase superfamily. STE Ser/Thr protein kinase family. MAP kinase kinase kinase subfamily.

Its subcellular location is the cell membrane. It carries out the reaction L-seryl-[protein] + ATP = O-phospho-L-seryl-[protein] + ADP + H(+). The catalysed reaction is L-threonyl-[protein] + ATP = O-phospho-L-threonyl-[protein] + ADP + H(+). In terms of biological role, the CERK1, MEKK1a/b, MKK1a/b/c and MPK4a/b proteins are involved in pathogen defense. The pathway induces rapid growth inhibition, cell wall depositions and accumulation of defense-related transcripts. This protein is required for responses to chitin and acts redundantly with MEKK1b. This is Mitogen-activated protein kinase kinase kinase 1a from Physcomitrium patens (Spreading-leaved earth moss).